A 164-amino-acid polypeptide reads, in one-letter code: uncharacterized protein (164 aa).

Polar residues predominate over residues 1 to 29 (MLCVRSSSSNLESDTYLSRYSTRASAGTG). The tract at residues 1-62 (MLCVRSSSSN…SKPSNNKNID (62 aa)) is disordered. Residues 43–62 (SSDSSSSSSESKPSNNKNID) are compositionally biased toward low complexity.

This is an uncharacterized protein from Schizosaccharomyces pombe (strain 972 / ATCC 24843) (Fission yeast).